A 245-amino-acid polypeptide reads, in one-letter code: Eukaryotic translation initiation factor 6-2 (245 aa).

This sequence belongs to the eIF-6 family. As to quaternary structure, monomer. Associates with the 60S ribosomal subunit.

The protein localises to the cytoplasm. The protein resides in the nucleus. It is found in the nucleolus. Its function is as follows. Binds to the 60S ribosomal subunit and prevents its association with the 40S ribosomal subunit to form the 80S initiation complex in the cytoplasm. May also be involved in ribosome biogenesis. The chain is Eukaryotic translation initiation factor 6-2 from Arabidopsis thaliana (Mouse-ear cress).